The chain runs to 178 residues: Cytochrome b6-f complex iron-sulfur subunit 3 (178 aa).

Residues F20–I42 traverse the membrane as a helical segment. Positions P65 to I161 constitute a Rieske domain. [2Fe-2S] cluster contacts are provided by C107, H109, C125, and H128. Cysteines 112 and 127 form a disulfide.

It belongs to the Rieske iron-sulfur protein family. In terms of assembly, the 4 large subunits of the cytochrome b6-f complex are cytochrome b6, subunit IV (17 kDa polypeptide, PetD), cytochrome f and the Rieske protein, while the 4 small subunits are PetG, PetL, PetM and PetN. The complex functions as a dimer. [2Fe-2S] cluster is required as a cofactor.

It is found in the cellular thylakoid membrane. The catalysed reaction is 2 oxidized [plastocyanin] + a plastoquinol + 2 H(+)(in) = 2 reduced [plastocyanin] + a plastoquinone + 4 H(+)(out). Its function is as follows. Component of the cytochrome b6-f complex, which mediates electron transfer between photosystem II (PSII) and photosystem I (PSI), cyclic electron flow around PSI, and state transitions. In Nostoc sp. (strain PCC 7120 / SAG 25.82 / UTEX 2576), this protein is Cytochrome b6-f complex iron-sulfur subunit 3.